Consider the following 555-residue polypeptide: Benzoyl-CoA-dihydrodiol lyase (555 aa).

This sequence belongs to the benzoyl-CoA oxygenase component C family. As to quaternary structure, homodimer.

It catalyses the reaction 2,3-epoxy-2,3-dihydrobenzoyl-CoA + 2 H2O = (3Z)-6-oxohex-3-enoyl-CoA + formate + H(+). In terms of biological role, catalyzes the ring opening of 2,3-epoxy-2,3-dihydroxybenzoyl-CoA to form 3,4-didehydroadipyl-CoA semialdehyde. The sequence is that of Benzoyl-CoA-dihydrodiol lyase (boxC) from Aromatoleum evansii (Azoarcus evansii).